The sequence spans 514 residues: MSVMTIQRRWLVAAGVTAAMVASPVWAAKDAVIAVGSTFTSLDPYDANDSLSQTVAKSFYQGLFGFDKDMKLINVLADSYDISSDGLTYTVKLHPGVKFHDGSAFNAAAVKVNLDRASNPDNRLKRYNLFKMIDKTEAVDDLTVKITLKTPFSAFVNNLAHPAAVMISPAALTQYGKEIGFHPVGTGPYRFVAWNQTDFVKVEKFSGYWKAGLPKLDSITWRPVVDNNTRAALLQTGEAQFAYPIPFEQAKVLEKNDKLALVASPSILHRYISMNVTQKPFDNPKVRQALNYAINKDALIKVAFSGYATPAEGPLPNSIDYSVKYHPWPYDPAKARELLKEAGYPNGFTTTLWSSHNHSTAQKVLQFTQQQLAQVGVKVQVTAMDAGQRAAEVEGKGVKETGVRLFYTGWSASTGEADWALSPLFATASWPPAQFNTAFYSNPQVDTDLANALKTTDRAEKQTLYKDAQDKIWADAPWIFLATERLVSANSKKLTGFYVMPDTLFSFEDADLTE.

Positions M1–A27 are cleaved as a signal peptide.

This sequence belongs to the bacterial solute-binding protein 5 family. As to quaternary structure, the complex is composed of two ATP-binding proteins (GsiA), two transmembrane proteins (GsiC and GsiD) and a solute-binding protein (GsiB).

The protein resides in the periplasm. Functionally, part of the ABC transporter complex GsiABCD involved in glutathione import. Binds glutathione. The chain is Glutathione-binding protein GsiB from Pectobacterium atrosepticum (strain SCRI 1043 / ATCC BAA-672) (Erwinia carotovora subsp. atroseptica).